A 469-amino-acid polypeptide reads, in one-letter code: Ribulose bisphosphate carboxylase large chain (469 aa).

Residue lysine 8 is modified to N6,N6,N6-trimethyllysine. The substrate site is built by asparagine 117 and threonine 167. Lysine 169 functions as the Proton acceptor in the catalytic mechanism. Position 171 (lysine 171) interacts with substrate. Mg(2+) is bound by residues lysine 195, aspartate 197, and glutamate 198. An N6-carboxylysine modification is found at lysine 195. The active-site Proton acceptor is the histidine 288. Residues arginine 289, histidine 321, and serine 373 each contribute to the substrate site.

This sequence belongs to the RuBisCO large chain family. Type I subfamily. In terms of assembly, heterohexadecamer of 8 large chains and 8 small chains; disulfide-linked. The disulfide link is formed within the large subunit homodimers. Requires Mg(2+) as cofactor. The disulfide bond which can form in the large chain dimeric partners within the hexadecamer appears to be associated with oxidative stress and protein turnover.

It is found in the plastid. The protein localises to the chloroplast. The enzyme catalyses 2 (2R)-3-phosphoglycerate + 2 H(+) = D-ribulose 1,5-bisphosphate + CO2 + H2O. It carries out the reaction D-ribulose 1,5-bisphosphate + O2 = 2-phosphoglycolate + (2R)-3-phosphoglycerate + 2 H(+). RuBisCO catalyzes two reactions: the carboxylation of D-ribulose 1,5-bisphosphate, the primary event in carbon dioxide fixation, as well as the oxidative fragmentation of the pentose substrate in the photorespiration process. Both reactions occur simultaneously and in competition at the same active site. In Persicaria senticosa (Knotweed), this protein is Ribulose bisphosphate carboxylase large chain.